A 368-amino-acid chain; its full sequence is Protein RecA (368 aa).

ATP is bound at residue 72 to 79 (GNESSGKT).

Belongs to the RecA family.

The protein resides in the cytoplasm. Can catalyze the hydrolysis of ATP in the presence of single-stranded DNA, the ATP-dependent uptake of single-stranded DNA by duplex DNA, and the ATP-dependent hybridization of homologous single-stranded DNAs. It interacts with LexA causing its activation and leading to its autocatalytic cleavage. The sequence is that of Protein RecA from Petrotoga mobilis (strain DSM 10674 / SJ95).